The primary structure comprises 245 residues: Probable ABC transporter ATP-binding protein p29 (245 aa).

The ABC transporter domain maps to 7–245 (LSFEKVSIIY…KEQLYKIYDN (239 aa)). 39 to 46 (GKSGVGKS) contacts ATP.

The protein belongs to the ABC transporter superfamily.

In terms of biological role, part of a high-affinity transport system. This Mycoplasma genitalium (strain ATCC 33530 / DSM 19775 / NCTC 10195 / G37) (Mycoplasmoides genitalium) protein is Probable ABC transporter ATP-binding protein p29 (p29).